Consider the following 365-residue polypeptide: 3-dehydroquinate synthase (365 aa).

Residues 106 to 110 (GVIGD), 130 to 131 (TT), Lys142, Lys151, and 169 to 172 (FFAT) each bind NAD(+). Zn(2+) is bound by residues Glu184, His247, and His264.

This sequence belongs to the sugar phosphate cyclases superfamily. Dehydroquinate synthase family. It depends on NAD(+) as a cofactor. The cofactor is Co(2+). Requires Zn(2+) as cofactor.

Its subcellular location is the cytoplasm. It carries out the reaction 7-phospho-2-dehydro-3-deoxy-D-arabino-heptonate = 3-dehydroquinate + phosphate. It participates in metabolic intermediate biosynthesis; chorismate biosynthesis; chorismate from D-erythrose 4-phosphate and phosphoenolpyruvate: step 2/7. Catalyzes the conversion of 3-deoxy-D-arabino-heptulosonate 7-phosphate (DAHP) to dehydroquinate (DHQ). The protein is 3-dehydroquinate synthase of Listeria monocytogenes serovar 1/2a (strain ATCC BAA-679 / EGD-e).